Here is a 274-residue protein sequence, read N- to C-terminus: uncharacterized protein (274 aa).

Positions 1–17 (MKKLLAGFLTLSLALAA) are cleaved as a signal peptide. A lipid anchor (N-palmitoyl cysteine) is attached at Cys-18. The S-diacylglycerol cysteine moiety is linked to residue Cys-18. Residues 18–169 (CSNGSDDDSS…DANNGASSAN (152 aa)) form a disordered region. The span at 25–76 (DSSKKDDSSKDNQSSDDKSKDSKNDDKKNNDSDKDKDNNSDSDKNSDSKSDD) shows a compositional bias: basic and acidic residues. A compositionally biased stretch (low complexity) spans 91 to 169 (SDNASGSDSS…DANNGASSAN (79 aa)).

The protein localises to the cell membrane. This is an uncharacterized protein from Staphylococcus saprophyticus subsp. saprophyticus (strain ATCC 15305 / DSM 20229 / NCIMB 8711 / NCTC 7292 / S-41).